We begin with the raw amino-acid sequence, 307 residues long: Acyl transferase (307 aa).

Active-site charge relay system residues include Ser-116, Asp-213, and His-243.

The protein belongs to the LuxD family.

It functions in the pathway lipid metabolism; fatty acid reduction for biolumincescence. Functionally, acyl transferase is part of the fatty acid reductase system required for aldehyde biosynthesis; it produces fatty acids for the luminescent reaction. The polypeptide is Acyl transferase (Photorhabdus luminescens (Xenorhabdus luminescens)).